Consider the following 169-residue polypeptide: Crossover junction endodeoxyribonuclease RuvC (169 aa).

Residues aspartate 15, glutamate 75, and aspartate 147 contribute to the active site. Residues aspartate 15, glutamate 75, and aspartate 147 each coordinate Mg(2+).

It belongs to the RuvC family. In terms of assembly, homodimer which binds Holliday junction (HJ) DNA. The HJ becomes 2-fold symmetrical on binding to RuvC with unstacked arms; it has a different conformation from HJ DNA in complex with RuvA. In the full resolvosome a probable DNA-RuvA(4)-RuvB(12)-RuvC(2) complex forms which resolves the HJ. Requires Mg(2+) as cofactor.

It localises to the cytoplasm. The enzyme catalyses Endonucleolytic cleavage at a junction such as a reciprocal single-stranded crossover between two homologous DNA duplexes (Holliday junction).. In terms of biological role, the RuvA-RuvB-RuvC complex processes Holliday junction (HJ) DNA during genetic recombination and DNA repair. Endonuclease that resolves HJ intermediates. Cleaves cruciform DNA by making single-stranded nicks across the HJ at symmetrical positions within the homologous arms, yielding a 5'-phosphate and a 3'-hydroxyl group; requires a central core of homology in the junction. The consensus cleavage sequence is 5'-(A/T)TT(C/G)-3'. Cleavage occurs on the 3'-side of the TT dinucleotide at the point of strand exchange. HJ branch migration catalyzed by RuvA-RuvB allows RuvC to scan DNA until it finds its consensus sequence, where it cleaves and resolves the cruciform DNA. The protein is Crossover junction endodeoxyribonuclease RuvC of Caulobacter vibrioides (strain ATCC 19089 / CIP 103742 / CB 15) (Caulobacter crescentus).